The following is a 353-amino-acid chain: Cyclin-dependent kinase-like 1 (353 aa).

The region spanning 4–286 is the Protein kinase domain; it reads YDRLSKLGEG…CSELMLHGIF (283 aa). Residues 10–18 and Lys-33 contribute to the ATP site; that span reads LGEGSYGVV. Residue Asp-126 is the Proton acceptor of the active site. The interval 331-353 is disordered; it reads GGNHGNNNNNGNGINRNFLPTIS. Positions 335–347 are enriched in low complexity; it reads GNNNNNGNGINRN.

This sequence belongs to the protein kinase superfamily. Ser/Thr protein kinase family. Specifically expressed in head and tail ciliated sensory neurons.

The protein resides in the cell projection. Its subcellular location is the cilium. The catalysed reaction is L-seryl-[protein] + ATP = O-phospho-L-seryl-[protein] + ADP + H(+). It carries out the reaction L-threonyl-[protein] + ATP = O-phospho-L-threonyl-[protein] + ADP + H(+). In terms of biological role, modulates cilium assembly. This Caenorhabditis elegans protein is Cyclin-dependent kinase-like 1.